A 567-amino-acid chain; its full sequence is Urease subunit alpha (567 aa).

In terms of domain architecture, Urease spans 129 to 567 (GGIDVHVHFI…VPMSQRYFLF (439 aa)). His134, His136, and Lys217 together coordinate Ni(2+). Lys217 carries the post-translational modification N6-carboxylysine. Residue His219 coordinates substrate. Residues His246 and His272 each contribute to the Ni(2+) site. His320 serves as the catalytic Proton donor. Asp360 serves as a coordination point for Ni(2+).

Belongs to the metallo-dependent hydrolases superfamily. Urease alpha subunit family. In terms of assembly, heterotrimer of UreA (gamma), UreB (beta) and UreC (alpha) subunits. Three heterotrimers associate to form the active enzyme. Requires Ni cation as cofactor. Carboxylation allows a single lysine to coordinate two nickel ions.

Its subcellular location is the cytoplasm. It catalyses the reaction urea + 2 H2O + H(+) = hydrogencarbonate + 2 NH4(+). The protein operates within nitrogen metabolism; urea degradation; CO(2) and NH(3) from urea (urease route): step 1/1. The chain is Urease subunit alpha from Blochmanniella floridana.